The chain runs to 387 residues: MPVPASWPHPPGPFLLLTLLLGLTEVAGEEELQMIQPEKLLLVTVGKTATLHCTVTSLLPVGPVLWFRGVGPGRELIYNQKEGHFPRVTTVSDLTKRNNMDFSIRISSITPADVGTYYCVKFRKGSPENVEFKSGPGTEMALGAKPSAPVVLGPAARTTPEHTVSFTCESHGFSPRDITLKWFKNGNELSDFQTNVDPTGQSVAYSIRSTARVVLDPWDVRSQVICEVAHVTLQGDPLRGTANLSEAIRVPPTLEVTQQPMRVGNQVNVTCQVRKFYPQSLQLTWSENGNVCQRETASTLTENKDGTYNWTSWFLVNISDQRDDVVLTCQVKHDGQLAVSKRLALEVTVHQKDQSSDATPGPASSLTALLLIAVLLGPIYVPWKQKT.

The signal sequence occupies residues 1–28; the sequence is MPVPASWPHPPGPFLLLTLLLGLTEVAG. The Ig-like V-type domain maps to 29-137; sequence EEELQMIQPE…ENVEFKSGPG (109 aa). Residues 29 to 360 are Extracellular-facing; the sequence is EEELQMIQPE…QKDQSSDATP (332 aa). 2 disulfides stabilise this stretch: Cys53–Cys119 and Cys168–Cys226. Ig-like C1-type domains follow at residues 146-245 and 252-340; these read PSAP…ANLS and PTLE…LAVS. N-linked (GlcNAc...) asparagine glycosylation is found at Asn243, Asn268, Asn309, and Asn317. Residues Cys271 and Cys329 are joined by a disulfide bond. A helical transmembrane segment spans residues 361 to 383; the sequence is GPASSLTALLLIAVLLGPIYVPW. The Cytoplasmic portion of the chain corresponds to 384–387; sequence KQKT.

As to quaternary structure, interacts with CD47. In terms of tissue distribution, detected in liver, and at very low levels in brain, heart, lung, pancreas, kidney, placenta and skeletal muscle. Expressed on CD4+ T-cells, CD8+ T-cells, CD56-bright natural killer (NK) cells, CD20+ cells, and all activated NK cells. Mainly present in the paracortical T-cell area of lymph nodes, with only sparse positive cells in the mantle and in the germinal center of B-cell follicles. In the thymus, primarily expressed in the medulla on mature T-lymphocytes that have undergone thymic selection.

Its subcellular location is the membrane. Functionally, probable immunoglobulin-like cell surface receptor. On binding with CD47, mediates cell-cell adhesion. Engagement on T-cells by CD47 on antigen-presenting cells results in enhanced antigen-specific T-cell proliferation and costimulates T-cell activation. This chain is Signal-regulatory protein gamma (SIRPG), found in Homo sapiens (Human).